A 185-amino-acid polypeptide reads, in one-letter code: TRAF-interacting protein with FHA domain-containing protein A (185 aa).

Thr-9 is subject to Phosphothreonine. Positions 48–104 (VKFGRNSNMCQYTFQDKQVSRVQFALQPFKQFNSSVLSFEIKNMSKKTSLMVDNQEL) constitute an FHA domain.

It belongs to the TIFA family. As to quaternary structure, homooligomer; homooligomerizes following phosphorylation at Thr-9. Interacts with IRAK1, TRAF2 and TRAF6. Interacts with TIFAB; binding to TIFAB inhibits TRAF6 activation, possibly by inducing a conformational change in TIFA. Interacts with ZCCHC11; binding to ZCCHC11 suppresses the TRAF6-dependent activation of NF-kappa-B. Post-translationally, phosphorylated at Thr-9 following detection of ADP-D-glycero-beta-D-manno-heptose (ADP-Heptose) by ALPK1. Phosphorylation at Thr-9 by ALPK1 leads to the formation of an intermolecular binding between the FHA domain and phosphorylated Thr-9, promoting TIFA oligomerization and TIFA-mediated NF-kappa-B activation.

Its subcellular location is the cytoplasm. Functionally, adapter molecule that plays a key role in the activation of pro-inflammatory NF-kappa-B signaling following detection of bacterial pathogen-associated molecular pattern metabolites (PAMPs). Promotes activation of an innate immune response by inducing the oligomerization and polyubiquitination of TRAF6, which leads to the activation of TAK1 and IKK through a proteasome-independent mechanism. TIFA-dependent innate immune response is triggered by ADP-D-glycero-beta-D-manno-heptose (ADP-Heptose), a potent PAMP present in all Gram-negative and some Gram-positive bacteria: ADP-Heptose is recognized by ALPK1, which phosphorylates TIFA at Thr-9, leading to TIFA homooligomerization and subsequent activation of pro-inflammatory NF-kappa-B signaling. The protein is TRAF-interacting protein with FHA domain-containing protein A of Rattus norvegicus (Rat).